A 466-amino-acid chain; its full sequence is ATP synthase subunit beta (466 aa).

153-160 (GGAGVGKT) provides a ligand contact to ATP.

This sequence belongs to the ATPase alpha/beta chains family. In terms of assembly, F-type ATPases have 2 components, CF(1) - the catalytic core - and CF(0) - the membrane proton channel. CF(1) has five subunits: alpha(3), beta(3), gamma(1), delta(1), epsilon(1). CF(0) has three main subunits: a(1), b(2) and c(9-12). The alpha and beta chains form an alternating ring which encloses part of the gamma chain. CF(1) is attached to CF(0) by a central stalk formed by the gamma and epsilon chains, while a peripheral stalk is formed by the delta and b chains.

The protein localises to the cell membrane. The catalysed reaction is ATP + H2O + 4 H(+)(in) = ADP + phosphate + 5 H(+)(out). Produces ATP from ADP in the presence of a proton gradient across the membrane. The catalytic sites are hosted primarily by the beta subunits. This Oenococcus oeni (strain ATCC BAA-331 / PSU-1) protein is ATP synthase subunit beta.